The chain runs to 299 residues: Diaminopimelate epimerase (299 aa).

Residues Asn11 and Asn63 each contribute to the substrate site. Cys72 functions as the Proton donor in the catalytic mechanism. Substrate is bound by residues 73–74 (GN), Asn211, and 229–230 (ER). Residue Cys238 is the Proton acceptor of the active site. 239 to 240 (GT) is a substrate binding site.

It belongs to the diaminopimelate epimerase family. In terms of assembly, homodimer.

The protein resides in the cytoplasm. The catalysed reaction is (2S,6S)-2,6-diaminopimelate = meso-2,6-diaminopimelate. Its pathway is amino-acid biosynthesis; L-lysine biosynthesis via DAP pathway; DL-2,6-diaminopimelate from LL-2,6-diaminopimelate: step 1/1. Functionally, catalyzes the stereoinversion of LL-2,6-diaminopimelate (L,L-DAP) to meso-diaminopimelate (meso-DAP), a precursor of L-lysine and an essential component of the bacterial peptidoglycan. This is Diaminopimelate epimerase from Natranaerobius thermophilus (strain ATCC BAA-1301 / DSM 18059 / JW/NM-WN-LF).